The following is a 526-amino-acid chain: Vitamin B6 transporter bsu1 (526 aa).

The disordered stretch occupies residues 1 to 53 (MASKIASLFSPSETASKDQHENVAEDLELGTASSQSDGIHETNSEYDEKKREE). Residues 38 to 53 (GIHETNSEYDEKKREE) show a composition bias toward basic and acidic residues. A run of 12 helical transmembrane segments spans residues 81–101 (WSIV…SNGF), 118–138 (VATL…MFLG), 147–167 (KPVY…CALP), 173–192 (MIIS…TNVA), 204–224 (AGVP…GAPM), 238–257 (WLYY…ILII), 314–330 (LYNF…LTAI), 349–366 (YLSG…QPIQ), 387–407 (FTSA…FAFT), 413–432 (PWMS…GHNW), 444–461 (PLLS…SFIG), and 480–501 (WAVA…TFYF).

This sequence belongs to the major facilitator superfamily. CAR1 family.

The protein resides in the membrane. Its function is as follows. Thiamine-regulated, high affinity import carrier of pyridoxine, pyridoxal and pyridoxamine. Also imports, but does not export, amiloride and so confers sensitivity. The polypeptide is Vitamin B6 transporter bsu1 (bsu1) (Schizosaccharomyces pombe (strain 972 / ATCC 24843) (Fission yeast)).